The following is a 77-amino-acid chain: Large ribosomal subunit protein uL29 (77 aa).

It belongs to the universal ribosomal protein uL29 family.

The chain is Large ribosomal subunit protein uL29 from Methanopyrus kandleri (strain AV19 / DSM 6324 / JCM 9639 / NBRC 100938).